We begin with the raw amino-acid sequence, 172 residues long: Pre-intermoult gene 1 protein (172 aa).

Positions 1-22 (MKLTKLWLLFVCLGLFVTLVVS) are cleaved as a signal peptide. The span at 25–45 (TDSDADSDSSADSDSSADSDE) shows a compositional bias: acidic residues. Residues 25–172 (TDSDADSDSS…RRNNNSRRRG (148 aa)) are disordered. 3 repeat units span residues 27–32 (SDADSD), 33–38 (SSADSD), and 39–44 (SSADSD). Positions 27-44 (SDADSDSSADSDSSADSD) are 3 X 6 AA tandem repeats of S-S-A-D-S-D. The segment covering 55–77 (TSTTESSATNSSGSSDDASGSSS) has biased composition (low complexity). Acidic residues predominate over residues 78-95 (DVDDGSDDDTDSGSDTDY). Basic residues predominate over residues 104–172 (VKKRANRKKA…RRNNNSRRRG (69 aa)).

In terms of tissue distribution, low expression in first to third instar larvae salivary glands.

In Drosophila melanogaster (Fruit fly), this protein is Pre-intermoult gene 1 protein (Pig1).